We begin with the raw amino-acid sequence, 135 residues long: Probable histone H2A.8 (135 aa).

Belongs to the histone H2A family. As to quaternary structure, the nucleosome is a histone octamer containing two molecules each of H2A, H2B, H3 and H4 assembled in one H3-H4 heterotetramer and two H2A-H2B heterodimers. The octamer wraps approximately 147 bp of DNA.

It localises to the nucleus. Its subcellular location is the chromosome. Functionally, core component of nucleosome. Nucleosomes wrap and compact DNA into chromatin, limiting DNA accessibility to the cellular machineries which require DNA as a template. Histones thereby play a central role in transcription regulation, DNA repair, DNA replication and chromosomal stability. DNA accessibility is regulated via a complex set of post-translational modifications of histones, also called histone code, and nucleosome remodeling. In Oryza sativa subsp. indica (Rice), this protein is Probable histone H2A.8.